The primary structure comprises 142 residues: Large ribosomal subunit protein uL13 (142 aa).

This sequence belongs to the universal ribosomal protein uL13 family. In terms of assembly, part of the 50S ribosomal subunit.

Its function is as follows. This protein is one of the early assembly proteins of the 50S ribosomal subunit, although it is not seen to bind rRNA by itself. It is important during the early stages of 50S assembly. This is Large ribosomal subunit protein uL13 from Proteus mirabilis (strain HI4320).